An 83-amino-acid chain; its full sequence is Small ribosomal subunit protein bS16 (83 aa).

It belongs to the bacterial ribosomal protein bS16 family.

The protein is Small ribosomal subunit protein bS16 of Polaromonas sp. (strain JS666 / ATCC BAA-500).